The sequence spans 207 residues: NAD(P)H-quinone oxidoreductase subunit K, chloroplastic (207 aa).

Residues C47, C48, C112, and C143 each contribute to the [4Fe-4S] cluster site.

Belongs to the complex I 20 kDa subunit family. In terms of assembly, NDH is composed of at least 16 different subunits, 5 of which are encoded in the nucleus. Requires [4Fe-4S] cluster as cofactor.

The protein resides in the plastid. The protein localises to the chloroplast thylakoid membrane. The catalysed reaction is a plastoquinone + NADH + (n+1) H(+)(in) = a plastoquinol + NAD(+) + n H(+)(out). It carries out the reaction a plastoquinone + NADPH + (n+1) H(+)(in) = a plastoquinol + NADP(+) + n H(+)(out). Its function is as follows. NDH shuttles electrons from NAD(P)H:plastoquinone, via FMN and iron-sulfur (Fe-S) centers, to quinones in the photosynthetic chain and possibly in a chloroplast respiratory chain. The immediate electron acceptor for the enzyme in this species is believed to be plastoquinone. Couples the redox reaction to proton translocation, and thus conserves the redox energy in a proton gradient. The chain is NAD(P)H-quinone oxidoreductase subunit K, chloroplastic from Psilotum nudum (Whisk fern).